The following is a 257-amino-acid chain: UPF0246 protein BF3795 (257 aa).

The protein belongs to the UPF0246 family.

This is UPF0246 protein BF3795 from Bacteroides fragilis (strain ATCC 25285 / DSM 2151 / CCUG 4856 / JCM 11019 / LMG 10263 / NCTC 9343 / Onslow / VPI 2553 / EN-2).